Consider the following 215-residue polypeptide: Adenylate kinase (215 aa).

Residue 10–15 (GAGKGT) coordinates ATP. An NMP region spans residues 30 to 59 (STGDLLRAAVAAGTPLGKEAKAYMDRGELV). AMP is bound by residues Thr31, Arg36, 57 to 59 (ELV), 85 to 88 (GFPR), and Gln92. The segment at 126-163 (GRRTCKSCGQMYNVYYSPSKVEGKCDKCGGELFQRDDD) is LID. Arg127 contributes to the ATP binding site. Residues Cys130, Cys133, Cys150, and Cys153 each coordinate Zn(2+). The AMP site is built by Arg160 and Arg171. Residue Gly199 participates in ATP binding.

Belongs to the adenylate kinase family. Monomer.

The protein resides in the cytoplasm. It catalyses the reaction AMP + ATP = 2 ADP. Its pathway is purine metabolism; AMP biosynthesis via salvage pathway; AMP from ADP: step 1/1. Its function is as follows. Catalyzes the reversible transfer of the terminal phosphate group between ATP and AMP. Plays an important role in cellular energy homeostasis and in adenine nucleotide metabolism. This is Adenylate kinase from Thermodesulfovibrio yellowstonii (strain ATCC 51303 / DSM 11347 / YP87).